The following is a 262-amino-acid chain: Probable aminoglycoside 3'-phosphotransferase (262 aa).

Aspartate 187 acts as the Proton acceptor in catalysis.

This sequence belongs to the aminoglycoside phosphotransferase family.

It carries out the reaction kanamycin A + ATP = kanamycin 3'-phosphate + ADP + H(+). The polypeptide is Probable aminoglycoside 3'-phosphotransferase (ymdC) (Lactococcus lactis subsp. lactis (strain IL1403) (Streptococcus lactis)).